Consider the following 1234-residue polypeptide: Chromosome-associated kinesin KIF4B (1234 aa).

A Kinesin motor domain is found at 9–336 (PVRVALRCRP…LRYADRARKI (328 aa)). Residue 88–95 (GQTGSGKT) participates in ATP binding. Residues 350 to 999 (ELNHLKQQVQ…IKQKLILLQV (650 aa)) adopt a coiled-coil conformation. At Ser394 the chain carries Phosphoserine. Disordered stretches follow at residues 494-513 (EEAQ…AFTT) and 712-737 (KRLK…HGKE). The segment covering 498–513 (VETSPETSRSSDAFTT) has biased composition (polar residues). An interaction with PRC1 region spans residues 663-1234 (QWKQKKDKEV…GCSPIEEEAH (572 aa)). Over residues 713–737 (RLKDALQKQREVTDKRKETQSHGKE) the composition is skewed to basic and acidic residues. The Nuclear localization signal signature appears at 793–798 (PKLRKC). Thr799 bears the Phosphothreonine mark. A phosphoserine mark is found at Ser801, Ser951, Ser1001, Ser1013, Ser1017, and Ser1028. Residues 1000-1234 (ASRQKHLPND…GCSPIEEEAH (235 aa)) form a globular region. Disordered regions lie at residues 1007–1030 (PNDT…PSRV), 1052–1076 (VNEH…KPTK), 1122–1143 (RQQG…GSFK), and 1183–1234 (TAPA…EEAH). Acidic residues predominate over residues 1056–1071 (EDGDGDGDSDEGDDEE). A CRD; required for [4Fe-4S] cluster binding and localization to the spindle midzone and midbody during anaphase and telophase region spans residues 1086-1144 (QGCSCKGWCGNKQCGCRKQKSDCGVDCSCDPTKCRNRQQGKDSLGTVEQTQDSEGSFKL). Ser1128 carries the post-translational modification Phosphoserine. Position 1183 is a phosphothreonine (Thr1183). At Ser1188 the chain carries Phosphoserine. A Glycyl lysine isopeptide (Lys-Gly) (interchain with G-Cter in SUMO2) cross-link involves residue Lys1196. Ser1227 is modified (phosphoserine).

It belongs to the TRAFAC class myosin-kinesin ATPase superfamily. Kinesin family. Chromokinesin subfamily. [2Fe-2S] cluster is required as a cofactor. [4Fe-4S] cluster serves as cofactor. In terms of tissue distribution, specifically expressed in testis.

Its subcellular location is the nucleus matrix. It is found in the cytoplasm. It localises to the cytoskeleton. Iron-sulfur (Fe-S) cluster binding motor protein that has a role in chromosome segregation during mitosis. Translocates PRC1 to the plus ends of interdigitating spindle microtubules during the metaphase to anaphase transition, an essential step for the formation of an organized central spindle midzone and midbody and for successful cytokinesis. May play a role in mitotic chromosomal positioning and bipolar spindle stabilization. The polypeptide is Chromosome-associated kinesin KIF4B (KIF4B) (Homo sapiens (Human)).